The sequence spans 319 residues: Phosphoenolpyruvate transferase (319 aa).

D50 provides a ligand contact to 7,8-didemethyl-8-hydroxy-5-deazariboflavin.

Belongs to the CofD family. Homodimer. It depends on Mg(2+) as a cofactor.

The enzyme catalyses enolpyruvoyl-2-diphospho-5'-guanosine + 7,8-didemethyl-8-hydroxy-5-deazariboflavin = dehydro coenzyme F420-0 + GMP + H(+). The protein operates within cofactor biosynthesis; coenzyme F420 biosynthesis. In terms of biological role, catalyzes the transfer of the phosphoenolpyruvate moiety from enoylpyruvoyl-2-diphospho-5'-guanosine (EPPG) to 7,8-didemethyl-8-hydroxy-5-deazariboflavin (FO) with the formation of dehydro coenzyme F420-0 and GMP. This chain is Phosphoenolpyruvate transferase, found in Streptomyces coelicolor (strain ATCC BAA-471 / A3(2) / M145).